Here is an 86-residue protein sequence, read N- to C-terminus: uncharacterized protein (86 aa).

Positions 1–31 are cleaved as a signal peptide; that stretch reads MKQKLLLSGLAVSTVGITSYLLKDPSNRQKA. The disordered stretch occupies residues 46 to 69; that stretch reads PDMETFPVDKAGHPDPQDIEDNKM. The segment covering 55-69 has biased composition (basic and acidic residues); sequence KAGHPDPQDIEDNKM.

This is an uncharacterized protein from Bacillus subtilis (strain 168).